A 313-amino-acid polypeptide reads, in one-letter code: Cilia- and flagella-associated protein 36 (313 aa).

A phosphoserine mark is found at serine 85 and serine 147. Residues 147-187 (SDLEQEEMKILKEVLRKSKEEYDQEEERKRKKQLSEAKTEE) are a coiled coil. Disordered stretches follow at residues 165–204 (KEEYDQEEERKRKKQLSEAKTEEHPMQANETAKMSNSQGD) and 262–292 (KIKQNQTSEQKGKPAGEVEEMTEKPEMTAEE). The segment covering 179 to 189 (QLSEAKTEEHP) has biased composition (basic and acidic residues). Over residues 192–203 (ANETAKMSNSQG) the composition is skewed to polar residues. A Phosphoserine modification is found at serine 201. Residues 271–292 (QKGKPAGEVEEMTEKPEMTAEE) are compositionally biased toward basic and acidic residues.

It belongs to the CFAP36 family. As to quaternary structure, interacts with ARL3.

It localises to the nucleus. It is found in the cytoplasm. The protein resides in the cell projection. Its subcellular location is the cilium. The protein localises to the flagellum. Its function is as follows. May act as an effector for ARL3. The sequence is that of Cilia- and flagella-associated protein 36 from Bos taurus (Bovine).